We begin with the raw amino-acid sequence, 334 residues long: Putative B3 domain-containing protein At3g49610 (334 aa).

2 disordered regions span residues 69 to 89 (ERRT…GSEK) and 133 to 178 (DEFE…KFDP). Composition is skewed to polar residues over residues 73 to 84 (LGSSPTKTNTLF) and 141 to 157 (KSPT…SCLM). Positions 161-173 (KRKRYQSSGKSKK) are enriched in basic residues. The TF-B3 DNA-binding region spans 229-334 (FNKLLRNDFL…GVLCFALEKE (106 aa)).

It is found in the nucleus. The sequence is that of Putative B3 domain-containing protein At3g49610 from Arabidopsis thaliana (Mouse-ear cress).